A 446-amino-acid polypeptide reads, in one-letter code: Rhoptry surface protein CERLI1 (446 aa).

One can recognise a C2 domain in the interval 39–208; sequence KPIGQLYRLM…NQTKNNEKIE (170 aa). The 112-residue stretch at 252–363 folds into the PH domain; sequence GYLLHSNFYI…ILVSNYKRER (112 aa).

It localises to the cytoplasmic vesicle. It is found in the secretory vesicle. The protein localises to the rhoptry membrane. Functionally, essential for merozoite invasion of host cells by controlling rhoptry secretion. Binds to phosphatidic acid (PA) and phosphatidylinositol 4,5-bisphosphate (PIP2) lipids and thus, likely contributes to the assembly of the machinery that docks or primes the rhoptry to the parasite cell membrane prior to the fusion with the host cell membrane. This Plasmodium falciparum (isolate 3D7) protein is Rhoptry surface protein CERLI1.